The following is a 255-amino-acid chain: 5-oxoprolinase subunit A (255 aa).

It belongs to the LamB/PxpA family. Forms a complex composed of PxpA, PxpB and PxpC.

The catalysed reaction is 5-oxo-L-proline + ATP + 2 H2O = L-glutamate + ADP + phosphate + H(+). In terms of biological role, catalyzes the cleavage of 5-oxoproline to form L-glutamate coupled to the hydrolysis of ATP to ADP and inorganic phosphate. This chain is 5-oxoprolinase subunit A, found in Clostridium kluyveri (strain ATCC 8527 / DSM 555 / NBRC 12016 / NCIMB 10680 / K1).